The following is a 297-amino-acid chain: Virulence genes transcriptional activator SpvR (297 aa).

Residues 1-61 (MDFLINKKLK…IRKNGTLIPT (61 aa)) enclose the HTH lysR-type domain. A DNA-binding region (H-T-H motif) is located at residues 21–40 (FSIATSVLYITRTPLSRVIS).

The protein belongs to the LysR transcriptional regulatory family.

It is found in the cytoplasm. In terms of biological role, positive regulator for the plasmid-encoded virulence factors SpvA, SpvB, and SpvC. In Salmonella dublin, this protein is Virulence genes transcriptional activator SpvR (spvR).